A 629-amino-acid chain; its full sequence is Natural resistance-associated macrophage protein 2 homolog (629 aa).

Residues 1–151 are Cytoplasmic-facing; sequence MNNNNNNKKL…KSKFSIKKLK (151 aa). A disordered region spans residues 50–119; it reads NVVNGSIEDS…SDIDSSGDSI (70 aa). Residues 62 to 85 show a composition bias toward low complexity; sequence QQQQQQQQQQQQQQQQQQQQQQQQ. The span at 96–105 shows a compositional bias: basic and acidic residues; the sequence is DKPFQDRDSN. The span at 106 to 118 shows a compositional bias: low complexity; it reads IGDGSDIDSSGDS. A helical membrane pass occupies residues 152–172; sequence SFLGPALFISVGYMDPGNWAT. Residues 173–182 are Extracellular-facing; it reads DLEGGSRFGY. A helical membrane pass occupies residues 183–203; it reads QLMWVLLFSNIMALFLQTLVI. Over 204 to 224 the chain is Cytoplasmic; the sequence is KLALVTKNDLAQQCRKEYSKT. The helical transmembrane segment at 225–245 threads the bilayer; it reads VNIFLWLILELAIISTDLAEV. At 246 to 253 the chain is on the extracellular side; that stretch reads IGTAIGLN. The chain crosses the membrane as a helical span at residues 254-274; the sequence is ILFGLPLIAGVAITSLDTLLF. Topologically, residues 275–286 are cytoplasmic; the sequence is LAIQRWGIRKLE. The chain crosses the membrane as a helical span at residues 287–307; sequence LLILLLLSMITMCFVIELFLS. The Extracellular segment spans residues 308–326; that stretch reads KPIASEVFSGFVPRLNSDS. Residues 327 to 347 form a helical membrane-spanning segment; sequence VMVATGIVGATTMPHNLFLHG. At 348–376 the chain is on the cytoplasmic side; that stretch reads SVVKSRKIPNDRRKSVIKQAYRYNVIDTV. A helical transmembrane segment spans residues 377-397; that stretch reads LALNCAFFVNIAILMLAASVF. The Extracellular segment spans residues 398-421; it reads WKSNIQVTELSEAYRLLTKLMDGK. Residues 422–442 form a helical membrane-spanning segment; the sequence is LAAVLFGLGLFLAGQSSTITG. Residues 443 to 468 are Cytoplasmic-facing; that stretch reads TMAGQIVMEGFIKLRIKPWLRRFITR. A helical transmembrane segment spans residues 469-489; the sequence is LLAIIPAAIVIIVLGDKGTYT. Over 490 to 491 the chain is Extracellular; sequence LL. A helical membrane pass occupies residues 492–512; that stretch reads IISQVLLSIGLPFAVVPLIIF. Over 513–527 the chain is Cytoplasmic; the sequence is TSSYEIMGEFKNRLS. A helical transmembrane segment spans residues 528–548; sequence IIIINSIIALFIIGLNLATIF. Residues 549–565 are Extracellular-facing; that stretch reads QLINDFLHNDSIISKCL. N-linked (GlcNAc...) asparagine glycosylation is present at N557. The chain crosses the membrane as a helical span at residues 566-586; sequence TIIFLIPLSIALCCLLLWLII. Over 587–629 the chain is Cytoplasmic; sequence SKINFFTNLLSKIFNNNNNNNNKNIINNNNNYSGNTINNQTIQ.

This sequence belongs to the NRAMP family.

The protein localises to the cell membrane. In terms of biological role, divalent transition metal (iron and manganese) transporter. This is Natural resistance-associated macrophage protein 2 homolog (nramp2) from Dictyostelium discoideum (Social amoeba).